The sequence spans 74 residues: Consomatin Gh1 (74 aa).

A signal peptide spans 1–22 (MQTACWVMVMMMVWITAPLSEG). Positions 23–57 (GKLNDVIRGLVPDDVTPQLILRSLFFHRPSDSVVR) are excised as a propeptide. A disulfide bridge connects residues Cys65 and Cys70. Trp67 is subject to D-tryptophan. 4-hydroxyproline is present on residues Pro71, Pro72, and Pro74.

Belongs to the conotoxin C superfamily. Consomatin family. As to expression, expressed by the venom duct.

The protein localises to the secreted. Its function is as follows. Moderately activates human somatostatin receptors (SSTR) with a preferential activation of SSTR1 and SSTR4. In vivo, does not cause behavioral changes in mice within a few minutes of intracranial injection, but causes a progressive loss of movement thereafter. Four to five hours after injection, mice recover, even with the highest dose tested. Shows antinociception and antihyperalgesia activities in two mouse models of acute pain, most probably by acting outside the central nervous system. The protein is Consomatin Gh1 of Conus grahami (Cone snail).